Here is a 216-residue protein sequence, read N- to C-terminus: Nucleoside triphosphate pyrophosphatase (216 aa).

The Proton acceptor role is filled by aspartate 82.

It belongs to the Maf family. A divalent metal cation is required as a cofactor.

The protein localises to the cytoplasm. It catalyses the reaction a ribonucleoside 5'-triphosphate + H2O = a ribonucleoside 5'-phosphate + diphosphate + H(+). The catalysed reaction is a 2'-deoxyribonucleoside 5'-triphosphate + H2O = a 2'-deoxyribonucleoside 5'-phosphate + diphosphate + H(+). In terms of biological role, nucleoside triphosphate pyrophosphatase. May have a dual role in cell division arrest and in preventing the incorporation of modified nucleotides into cellular nucleic acids. The chain is Nucleoside triphosphate pyrophosphatase from Mycobacterium ulcerans (strain Agy99).